A 139-amino-acid polypeptide reads, in one-letter code: MTVEKVDATVADFDAHFDKLFAAGDDAEGKVKLLLFLADRDASSNQTWCPDCNVAEPVIYDRVEAAAKGKEKDVVLLRAYVGDKPTWRDPAHPWRADPRFRLTGVPTLIRWENGAAAARLGDDEAHLADKVDAVVNAAN.

The 136-residue stretch at 1–136 folds into the Thioredoxin domain; sequence MTVEKVDATV…LADKVDAVVN (136 aa). Active-site nucleophile residues include cysteine 49 and cysteine 52. Residues cysteine 49 and cysteine 52 are joined by a disulfide bond.

This sequence belongs to the thioredoxin family.

In terms of biological role, probable thiol-disulfide oxidoreductase that may participate in various redox reactions. This Oryza sativa subsp. japonica (Rice) protein is Thioredoxin-like protein Clot.